Reading from the N-terminus, the 124-residue chain is Small ribosomal subunit protein uS12 (124 aa).

Position 89 is a 3-methylthioaspartic acid (aspartate 89).

It belongs to the universal ribosomal protein uS12 family. In terms of assembly, part of the 30S ribosomal subunit. Contacts proteins S8 and S17. May interact with IF1 in the 30S initiation complex.

With S4 and S5 plays an important role in translational accuracy. In terms of biological role, interacts with and stabilizes bases of the 16S rRNA that are involved in tRNA selection in the A site and with the mRNA backbone. Located at the interface of the 30S and 50S subunits, it traverses the body of the 30S subunit contacting proteins on the other side and probably holding the rRNA structure together. The combined cluster of proteins S8, S12 and S17 appears to hold together the shoulder and platform of the 30S subunit. The sequence is that of Small ribosomal subunit protein uS12 from Campylobacter hominis (strain ATCC BAA-381 / DSM 21671 / CCUG 45161 / LMG 19568 / NCTC 13146 / CH001A).